We begin with the raw amino-acid sequence, 567 residues long: Malate synthase, glyoxysomal (567 aa).

Arginine 182 serves as the catalytic Proton acceptor. Aspartate 468 (proton donor) is an active-site residue. Positions 565–567 (SRL) match the Microbody targeting signal motif.

Belongs to the malate synthase family.

The protein localises to the glyoxysome. It carries out the reaction glyoxylate + acetyl-CoA + H2O = (S)-malate + CoA + H(+). The protein operates within carbohydrate metabolism; glyoxylate cycle; (S)-malate from isocitrate: step 2/2. The protein is Malate synthase, glyoxysomal of Ricinus communis (Castor bean).